Consider the following 817-residue polypeptide: General transcription factor 3C polypeptide 4 (817 aa).

Residue methionine 1 is modified to N-acetylmethionine. A disordered region spans residues 1-40; that stretch reads MSEADQALVGPKADEPSPPAEEKDEGGGKEAAADAAPGPS. Residue lysine 221 forms a Glycyl lysine isopeptide (Lys-Gly) (interchain with G-Cter in SUMO2) linkage. 2 positions are modified to phosphoserine: serine 600 and serine 607. The segment at 603 to 658 is disordered; it reads LLVDSPGMGDGEDEQQEEGTSKQGTKAGLQEKSKEGDTEETPEDSLTAGGDTGGRE. Lysine 624 is covalently cross-linked (Glycyl lysine isopeptide (Lys-Gly) (interchain with G-Cter in SUMO2)). The residue at position 647 (serine 647) is a Phosphoserine.

It belongs to the TFIIIC subunit 4 family. In terms of assembly, part of the TFIIIC subcomplex TFIIIC2, consisting of six subunits, GTF3C1, GTF3C2, GTF3C3, GTF3C4, GTF3C5 and GTF3C6. Interacts with BRF1, GTF3C1, GTF3C2, GTF3C5, GTF3C6, POLR3C and POLR3F.

It is found in the nucleus. It carries out the reaction L-lysyl-[protein] + acetyl-CoA = N(6)-acetyl-L-lysyl-[protein] + CoA + H(+). In terms of biological role, essential for RNA polymerase III to make a number of small nuclear and cytoplasmic RNAs, including 5S RNA, tRNA, and adenovirus-associated (VA) RNA of both cellular and viral origin. Has histone acetyltransferase activity (HAT) with unique specificity for free and nucleosomal H3. May cooperate with GTF3C5 in facilitating the recruitment of TFIIIB and RNA polymerase through direct interactions with BRF1, POLR3C and POLR3F. May be localized close to the A box. The sequence is that of General transcription factor 3C polypeptide 4 (Gtf3c4) from Mus musculus (Mouse).